The primary structure comprises 515 residues: Meiotically up-regulated gene 68 protein (515 aa).

Residues 165–204 (LHSIESERNESSLSLDSGESEKKSEEDNGNGEQNYIPEQY) are disordered.

Functionally, has a role in meiosis. The sequence is that of Meiotically up-regulated gene 68 protein (mug68) from Schizosaccharomyces pombe (strain 972 / ATCC 24843) (Fission yeast).